Reading from the N-terminus, the 343-residue chain is 3-dehydroquinate synthase (343 aa).

NAD(+)-binding positions include 86–90 (GALLD), 110–111 (TT), Lys123, and Lys132. Zn(2+) contacts are provided by Glu165, His229, and His243.

The protein belongs to the sugar phosphate cyclases superfamily. Dehydroquinate synthase family. Requires Co(2+) as cofactor. Zn(2+) is required as a cofactor. It depends on NAD(+) as a cofactor.

It is found in the cytoplasm. It catalyses the reaction 7-phospho-2-dehydro-3-deoxy-D-arabino-heptonate = 3-dehydroquinate + phosphate. It functions in the pathway metabolic intermediate biosynthesis; chorismate biosynthesis; chorismate from D-erythrose 4-phosphate and phosphoenolpyruvate: step 2/7. In terms of biological role, catalyzes the conversion of 3-deoxy-D-arabino-heptulosonate 7-phosphate (DAHP) to dehydroquinate (DHQ). The protein is 3-dehydroquinate synthase of Pyrobaculum islandicum (strain DSM 4184 / JCM 9189 / GEO3).